The following is a 490-amino-acid chain: Glucose-6-phosphate 1-dehydrogenase (490 aa).

NADP(+)-binding positions include Arg48, 90 to 91 (DI), and Lys145. Substrate is bound by residues His175, Lys179, Glu213, and Asp232. The Proton acceptor role is filled by His237. Substrate contacts are provided by Lys340 and Lys345.

It belongs to the glucose-6-phosphate dehydrogenase family.

It catalyses the reaction D-glucose 6-phosphate + NADP(+) = 6-phospho-D-glucono-1,5-lactone + NADPH + H(+). The protein operates within carbohydrate degradation; pentose phosphate pathway; D-ribulose 5-phosphate from D-glucose 6-phosphate (oxidative stage): step 1/3. Its function is as follows. Catalyzes the oxidation of glucose 6-phosphate to 6-phosphogluconolactone. This is Glucose-6-phosphate 1-dehydrogenase from Buchnera aphidicola subsp. Baizongia pistaciae (strain Bp).